Here is a 247-residue protein sequence, read N- to C-terminus: Ribosomal RNA small subunit methyltransferase G (247 aa).

Residues G86, L91, and R154 each contribute to the S-adenosyl-L-methionine site.

It belongs to the methyltransferase superfamily. RNA methyltransferase RsmG family.

It localises to the cytoplasm. In terms of biological role, specifically methylates the N7 position of a guanine in 16S rRNA. This is Ribosomal RNA small subunit methyltransferase G from Leptospira biflexa serovar Patoc (strain Patoc 1 / Ames).